The sequence spans 427 residues: Heterogeneous nuclear ribonucleoprotein K (427 aa).

The tract at residues Met1–Arg34 is disordered. A compositionally biased stretch (basic and acidic residues) spans Asn16–Arg34. KH domains follow at residues Met39–Ile101 and Asp117–Ile182. 2 consecutive repeat copies span residues Ala51–Val73 and Gly56–Gly59. The tract at residues Ala51–Ile385 is 2 X 22 AA approximate repeats. Residues Gly56–Gly371 form a 5 X 4 AA repeats of G-X-G-G region. The RNA-binding RGG-box stretch occupies residues Tyr209–Met246. Tandem repeats lie at residues Asp218 to Pro223, Gly230 to Gly233, and Asn240 to Gly243. Positions Asp218–Pro302 are 2 X 6 AA approximate repeats. A disordered region spans residues Gly221–Arg305. The span at Ser249–Pro258 shows a compositional bias: basic and acidic residues. 4 consecutive repeat copies span residues Gly268–Gly271, Asp297–Pro302, Ala363–Ile385, and Gly368–Gly371. A compositionally biased stretch (basic and acidic residues) spans Ser295–Arg305. The KH 3 domain maps to Ile351–Leu415.

Its subcellular location is the cytoplasm. It localises to the nucleus. The protein localises to the nucleoplasm. Functionally, one of the major pre-mRNA-binding proteins. Binds tenaciously to poly(C) sequences. Likely to play a role in the nuclear metabolism of hnRNAs, particularly for pre-mRNAs that contain cytidine-rich sequences. Can also bind poly(C) single-stranded DNA. May play an important role in p53/TP53 response to DNA damage, acting at the level of both transcription activation and repression. As part of a ribonucleoprotein complex, may negatively regulate the transcription of genes involved in neuronal differentiation. The polypeptide is Heterogeneous nuclear ribonucleoprotein K (HNRNPK) (Gallus gallus (Chicken)).